A 166-amino-acid chain; its full sequence is FMN reductase (NADH) RutF (166 aa).

The protein belongs to the non-flavoprotein flavin reductase family. RutF subfamily.

It catalyses the reaction FMNH2 + NAD(+) = FMN + NADH + 2 H(+). Catalyzes the reduction of FMN to FMNH2 which is used to reduce pyrimidine by RutA via the Rut pathway. In Cronobacter sakazakii (strain ATCC BAA-894) (Enterobacter sakazakii), this protein is FMN reductase (NADH) RutF.